Consider the following 170-residue polypeptide: Peptidyl-prolyl cis-trans isomerase ESS1 (170 aa).

A WW domain is found at 9-43; the sequence is TGLPTPWTVRYSKSKKREYFFNPETKHSQWEEPEG. Positions 30-53 are disordered; it reads NPETKHSQWEEPEGTNKDQLHKHL. Residues 32 to 53 are compositionally biased toward basic and acidic residues; sequence ETKHSQWEEPEGTNKDQLHKHL. Residues 57–170 enclose the PpiC domain; it reads PVRVRCLHIL…SGVHVIKRVG (114 aa). The residue at position 161 (S161) is a Phosphoserine.

This sequence belongs to the PpiC/parvulin rotamase family. As to quaternary structure, interacts with the RNA polymerase II largest subunit (RPB1) and with the SIN1-RDP3 HDAC subunit SIN3.

Its subcellular location is the cytoplasm. The protein localises to the nucleus. It carries out the reaction [protein]-peptidylproline (omega=180) = [protein]-peptidylproline (omega=0). Inhibited by 5-hydroxy-1,4-naphthoquinone (juglone), but not by FK506 or cyclosporin A. In terms of biological role, essential PPIase specific for phosphoserine and phosphothreonine N-terminal to the proline residue. Required for efficient pre-mRNA 3'-end processing and transcription termination, probably by inducing conformational changes by proline-directed isomerization in the C-terminal domain (CTD) of RPB1, thereby altering cofactor binding with the RNA polymerase II transcription complex. Also targets the SIN3-RPD3 histone deacetylase complex (HDAC). In Saccharomyces cerevisiae (strain ATCC 204508 / S288c) (Baker's yeast), this protein is Peptidyl-prolyl cis-trans isomerase ESS1 (ESS1).